The sequence spans 131 residues: Large ribosomal subunit protein bL19 (131 aa).

The interval K110–E131 is disordered. Residues R113 to A122 are compositionally biased toward basic and acidic residues.

Belongs to the bacterial ribosomal protein bL19 family.

In terms of biological role, this protein is located at the 30S-50S ribosomal subunit interface and may play a role in the structure and function of the aminoacyl-tRNA binding site. This chain is Large ribosomal subunit protein bL19, found in Azorhizobium caulinodans (strain ATCC 43989 / DSM 5975 / JCM 20966 / LMG 6465 / NBRC 14845 / NCIMB 13405 / ORS 571).